A 474-amino-acid polypeptide reads, in one-letter code: Citrate synthase, mitochondrial (474 aa).

The transit peptide at M1–S35 directs the protein to the mitochondrion. Catalysis depends on residues H310, H356, and D411.

It belongs to the citrate synthase family.

It localises to the mitochondrion matrix. The enzyme catalyses oxaloacetate + acetyl-CoA + H2O = citrate + CoA + H(+). Its pathway is carbohydrate metabolism; tricarboxylic acid cycle; isocitrate from oxaloacetate: step 1/2. This is Citrate synthase, mitochondrial (citA) from Emericella nidulans (strain FGSC A4 / ATCC 38163 / CBS 112.46 / NRRL 194 / M139) (Aspergillus nidulans).